Consider the following 26-residue polypeptide: Beta-hexosaminidase (26 aa).

Glycosylated. As to expression, detected in dry seeds and cotyledons.

The enzyme catalyses Hydrolysis of terminal non-reducing N-acetyl-D-hexosamine residues in N-acetyl-beta-D-hexosaminides.. Its activity is regulated as follows. Inhibited by AgNO(3) at a concentration of 0.1 mM. Strongly inhibited by CdCl(2), ZnCl(2) and FeCl(3) and moderately by CoCl(2), CuSO(4) and NiCl(2) at 10 mM concentration. CaCl(2), MgCl(2), MnSO(4) and KI also have a slight inhibitory effect of 20%-25% at 10 mM concentration. Activated to a small extent by MgCl(2) at 0.1 mM concentration but inhibited with increasing concentration. Not affected by carbohydrates such as fucose, galactose and glucose but displays a slight decrease in activity up to 25% with lactose, alpha-mannose and N-acetyl-galactosamine (GalNAc). In terms of biological role, has hexosaminidase activity. Active with both p-nitrophenyl-beta-D-N-acetylglucosamine (pNP-GlcNAc) and p-nitrophenyl-beta-D-N-acetylgalactosamine (pNP-GalNAc). Not active toward p-nitrophenyl-beta-D-N,N'-diacetylchitobiose (pNP-(GlcNAc)2) or p-nitrophenyl-beta-D-N,N',N''-triacetylchitobiose (pNP-(GlcNAc)3). Removes terminal GlcNAc and may be involved in storage protein degradation. This is Beta-hexosaminidase from Lupinus albus (White lupine).